The primary structure comprises 322 residues: Cysteine protease YopT (322 aa).

Residues 43–72 (SHSNRQKKLSATIKHNQSSRSMLDRKLTSD) are disordered. Catalysis depends on residues cysteine 139, histidine 258, and aspartate 274.

This sequence belongs to the peptidase C58 family. As to quaternary structure, interacts with human ARHA.

The protein resides in the secreted. Functionally, cysteine protease, which is translocated into infected cells and plays a central role in pathogenesis by cleaving the C-terminus end of the human small GTPase RhoA/ARHA, a regulator of cytoskeleton. Once cleaved, ARHA loses its lipid modification, and is released from the cell membrane, leading to the subsequent disruption of actin cytoskeleton of the host cell. The polypeptide is Cysteine protease YopT (yopT) (Yersinia enterocolitica).